Here is a 232-residue protein sequence, read N- to C-terminus: Small ribosomal subunit protein uS3 (232 aa).

One can recognise a KH type-2 domain in the interval 39–107 (VRQYLTKALK…PAQINIAEVR (69 aa)).

This sequence belongs to the universal ribosomal protein uS3 family. In terms of assembly, part of the 30S ribosomal subunit. Forms a tight complex with proteins S10 and S14.

Binds the lower part of the 30S subunit head. Binds mRNA in the 70S ribosome, positioning it for translation. The sequence is that of Small ribosomal subunit protein uS3 from Pseudoalteromonas atlantica (strain T6c / ATCC BAA-1087).